A 428-amino-acid polypeptide reads, in one-letter code: Somatostatin receptor type 3 (428 aa).

Polar residues predominate over residues 1 to 12 (MATVTYPSSEPT). Residues 1-20 (MATVTYPSSEPTTLDPGNAS) are disordered. Topologically, residues 1–45 (MATVTYPSSEPTTLDPGNASSTWPLDTTLGNTSAGASLTGLAVSG) are extracellular. 2 N-linked (GlcNAc...) asparagine glycosylation sites follow: N18 and N31. A helical transmembrane segment spans residues 46 to 71 (ILISLVYLVVCVVGLLGNSLVIYVVL). Topologically, residues 72–81 (RHTSSPSVTS) are cytoplasmic. The helical transmembrane segment at 82 to 103 (VYILNLALADELFMLGLPFLAA) threads the bilayer. Residues 104 to 118 (QNALSYWPFGSLMCR) are Extracellular-facing. An intrachain disulfide couples C117 to C192. Residues 119–140 (LVMAVDGINQFTSIFCLTVMSV) traverse the membrane as a helical segment. Over 141 to 162 (DRYLAVVHPTRSARWRTAPVAR) the chain is Cytoplasmic. A helical transmembrane segment spans residues 163-182 (TVSAAVWVASAVVVLPVVVF). At 183 to 206 (SGVPRGMSTCHMQWPEPAAAWRTA) the chain is on the extracellular side. Residues 207–232 (FIIYTAALGFFGPLLVICLCYLLIVV) form a helical membrane-spanning segment. The Cytoplasmic segment spans residues 233 to 266 (KVRSTTRRVRAPSCQWVQAPACQRRRRSERRVTR). A helical transmembrane segment spans residues 267 to 288 (MVVAVVALFVLCWMPFYLLNIV). Residues 289-302 (NVVCPLPEEPAFFG) are Extracellular-facing. A helical membrane pass occupies residues 303 to 325 (LYFLVVALPYANSCANPILYGFL). Residues 326 to 428 (SYRFKQGFRR…GDKASTLSHL (103 aa)) are Cytoplasmic-facing. Residues S341, S346, and S351 each carry the phosphoserine modification. The tract at residues 344 to 428 (IRSQEPGSGP…GDKASTLSHL (85 aa)) is disordered. A Phosphothreonine modification is found at T357. A compositionally biased stretch (acidic residues) spans 357-370 (TEEEEDEEEEERRE). Polar residues predominate over residues 385-412 (RLSQIAQAGTSGQQPRPCTGTAKEQQLL).

The protein belongs to the G-protein coupled receptor 1 family. As to quaternary structure, homodimer and heterodimer with SSTR2. Heterodimerization with SSTR2 inactivates SSTR3 receptor function. Post-translationally, phosphorylated. Phosphorylation increases upon somatostatin binding. As to expression, in the brain, primarily observed in the forebrain. Moderate levels found throughout laminae 2-6 of the neocortex and allocortex, and high levels in lamina 2 of the piriform and entorhinal cortices. High levels also present in the cornu ammonis fields of the hippocampus. In the amygdala, highly expressed in the nucleus of the lateral olfactory tract with expression also detected in the rostral portions of the basal magnocellular and lateral nuclei. In the diencephalon, moderate levels observed in the ventromedial and arcuate nuclei of the hypothalamus. In the midbrain, moderate levels found in the lateral portion of the substantia nigra pars reticulata.

The protein localises to the cell membrane. Receptor for somatostatin-14 and -28. This receptor is coupled via pertussis toxin sensitive G proteins to inhibition of adenylyl cyclase. The chain is Somatostatin receptor type 3 (Sstr3) from Mus musculus (Mouse).